A 65-amino-acid chain; its full sequence is Gallinacin-1 (65 aa).

The first 19 residues, 1-19, serve as a signal peptide directing secretion; the sequence is MRIVYLLLPFILLLAQGAA. Residues 20-25 constitute a propeptide that is removed on maturation; the sequence is GSSQAL. Cystine bridges form between Cys31–Cys59, Cys38–Cys53, and Cys43–Cys60.

Belongs to the beta-defensin family. As to expression, strong expression in the bone marrow, lung, testis. Moderate expression in the bursa and intestine. Low expression in the cloaca, gall bladder, brain and pancreas. Expressed in the vagina, ovarian stroma and the theca and granulosa layers of the ovarian follicle.

Its subcellular location is the secreted. The protein localises to the cytoplasmic granule. In terms of biological role, has bactericidal activity. Potent activity against E.coli ML-35, L.monocytogenes EGD and C.albicans. The protein is Gallinacin-1 (GAL1) of Gallus gallus (Chicken).